Reading from the N-terminus, the 155-residue chain is Ribosomal RNA large subunit methyltransferase H (155 aa).

S-adenosyl-L-methionine is bound by residues G104 and 123 to 128 (LGPMTF).

Belongs to the RNA methyltransferase RlmH family. In terms of assembly, homodimer.

The protein resides in the cytoplasm. The catalysed reaction is pseudouridine(1915) in 23S rRNA + S-adenosyl-L-methionine = N(3)-methylpseudouridine(1915) in 23S rRNA + S-adenosyl-L-homocysteine + H(+). Functionally, specifically methylates the pseudouridine at position 1915 (m3Psi1915) in 23S rRNA. The sequence is that of Ribosomal RNA large subunit methyltransferase H from Nitratidesulfovibrio vulgaris (strain DSM 19637 / Miyazaki F) (Desulfovibrio vulgaris).